The following is a 540-amino-acid chain: Gamma-cadinene synthase (540 aa).

D292, D296, D436, S440, and E444 together coordinate Mg(2+). Positions 292 to 296 (DDTYD) match the DDXXD motif motif.

This sequence belongs to the terpene synthase family. Requires Mg(2+) as cofactor. Mn(2+) is required as a cofactor.

The catalysed reaction is (2E,6E)-farnesyl diphosphate = (+)-gamma-cadinene + diphosphate. It functions in the pathway secondary metabolite biosynthesis; terpenoid biosynthesis. Its function is as follows. Sesquiterpene synthase that catalyzes the cyclization of trans,trans-farnesyl diphosphate (FPP) to gamma cadinene. This Ocimum basilicum (Sweet basil) protein is Gamma-cadinene synthase (CDS).